A 551-amino-acid polypeptide reads, in one-letter code: Probable inorganic carbon transporter subunit DabB2 (551 aa).

14 consecutive transmembrane segments (helical) span residues 6 to 26 (SHTTGLLLLAMPALLLMAAVI), 42 to 62 (VQWTSFAAFGLALLAVVSFLF), 65 to 85 (QQNLMLGAGSLPAGLGLLALS), 86 to 106 (IQVNGLTLVLASLVSFVLSVI), 132 to 152 (GFFLLVVISGNLGLFTLAIIA), 187 to 207 (LLLAATVLIGHQIGSLEFSQI), 217 to 237 (LSIALHVAAWLIVLAAILKSA), 252 to 272 (PTPVSALMHAGVVYSGAIIVL), 284 to 304 (ALLLLALIGLMTLAIGSLVML), 321 to 341 (LGFMMLELGLGLFGLALLHLV), 374 to 394 (VVAWFTTVIVSGLFTLGIAAA), 404 to 424 (MLPAVLTIIALATAQLMLKAL), 434 to 454 (VAAGAAIAMTGVYVFLHEVFI), and 469 to 489 (PLLDLLLMAITIITFLFVAWL).

This sequence belongs to the inorganic carbon transporter (TC 9.A.2) DabB family. As to quaternary structure, forms a complex with DabA2, possibly a heterodimer.

The protein localises to the cell inner membrane. With respect to regulation, uptake of inorganic carbon by cells in the presence of thiosulphate is fully inhibited by the uncouplers carbonyl cyanide m-chlorophenyl hydrazone (CCCP), carbonyl cyanide p-trifluoromethoxyphenyl hydrazone (FCCP), S13 or SF6847. Not inhibited by the ATPase inhibitor N,N-dicyclohexylcarbodiimide (DCCD). Inorganic carbon uptake is inhibited by the ionophore carbonyl cyanide m-chlorophenyl hydrazone (CCCP), suggesting uptake is coupled to a cation gradient. Its function is as follows. Part of an energy-coupled inorganic carbon pump; its substrate may be carbon dioxide. Expression of both dabA2 and dabB2 (DAB2) restores growth in ambient air to E.coli deleted of its carbonic anhydrase genes (called CAfree, deletion of 'can' and 'cynT'); neither dabA2 or dabB2 alone is sufficient. Rescue is pH-independent, suggesting it transports CO(2) and not carbonate ions. Together the genes allow greater than normal uptake of inorganic carbon by E.coli. Uptake of carbon dioxide rather than bicarbonate has been suggested based on kinetic calculations. The chain is Probable inorganic carbon transporter subunit DabB2 from Halothiobacillus neapolitanus (strain ATCC 23641 / c2) (Thiobacillus neapolitanus).